A 279-amino-acid polypeptide reads, in one-letter code: Diaminopimelate epimerase (279 aa).

Residues asparagine 12, glutamine 45, and asparagine 65 each coordinate substrate. Cysteine 74 functions as the Proton donor in the catalytic mechanism. Substrate-binding positions include 75–76 (GN), asparagine 162, asparagine 195, and 213–214 (ER). The Proton acceptor role is filled by cysteine 222. 223 to 224 (GT) is a binding site for substrate.

This sequence belongs to the diaminopimelate epimerase family. Homodimer.

It localises to the cytoplasm. It carries out the reaction (2S,6S)-2,6-diaminopimelate = meso-2,6-diaminopimelate. Its pathway is amino-acid biosynthesis; L-lysine biosynthesis via DAP pathway; DL-2,6-diaminopimelate from LL-2,6-diaminopimelate: step 1/1. Catalyzes the stereoinversion of LL-2,6-diaminopimelate (L,L-DAP) to meso-diaminopimelate (meso-DAP), a precursor of L-lysine and an essential component of the bacterial peptidoglycan. This Shewanella woodyi (strain ATCC 51908 / MS32) protein is Diaminopimelate epimerase.